Reading from the N-terminus, the 2190-residue chain is Integrator complex subunit 1 (2190 aa).

A disordered region spans residues 1 to 61 (MNRAKPTTVR…GLPSERKRDA (61 aa)). Ser13 carries the phosphoserine modification. Positions 34–44 (GQANESKTAST) are enriched in polar residues. Lys47 is subject to N6-acetyllysine. Phosphothreonine is present on Thr83. A phosphoserine mark is found at Ser87, Ser307, and Ser924. Residues 922-945 (AASGEEDDEGESKEQKAKKRQRQQ) form a disordered region. Over residues 923–932 (ASGEEDDEGE) the composition is skewed to acidic residues. Residues 1159–1179 (TATMHILVVHAMVILLTLGPP) form a helical membrane-spanning segment. The interval 1311 to 1334 (SLPPRRDSTEAPKPKSSPEQPIGQ) is disordered. A compositionally biased stretch (basic and acidic residues) spans 1314–1323 (PRRDSTEAPK). Ser1318, Ser1326, Ser1327, and Ser1395 each carry phosphoserine.

It belongs to the Integrator subunit 1 family. Component of the Integrator complex, composed of core subunits INTS1, INTS2, INTS3, INTS4, INTS5, INTS6, INTS7, INTS8, INTS9/RC74, INTS10, INTS11/CPSF3L, INTS12, INTS13, INTS14 and INTS15. The core complex associates with protein phosphatase 2A subunits PPP2CA and PPP2R1A, to form the Integrator-PP2A (INTAC) complex. Interacts with ESRRB, ESRRB is not a core component of the Integrator complex and this association is a bridge for the interaction with the multiprotein complex Integrator; attracts the transcriptional machinery.

The protein localises to the nucleus. The protein resides in the nucleus membrane. In terms of biological role, component of the integrator complex, a multiprotein complex that terminates RNA polymerase II (Pol II) transcription in the promoter-proximal region of genes. The integrator complex provides a quality checkpoint during transcription elongation by driving premature transcription termination of transcripts that are unfavorably configured for transcriptional elongation: the complex terminates transcription by (1) catalyzing dephosphorylation of the C-terminal domain (CTD) of Pol II subunit POLR2A/RPB1 and SUPT5H/SPT5, (2) degrading the exiting nascent RNA transcript via endonuclease activity and (3) promoting the release of Pol II from bound DNA. The integrator complex is also involved in terminating the synthesis of non-coding Pol II transcripts, such as enhancer RNAs (eRNAs), small nuclear RNAs (snRNAs), telomerase RNAs and long non-coding RNAs (lncRNAs). Within the integrator complex, INTS1 is involved in the post-termination step: INTS1 displaces INTS3 and the SOSS factors, allowing the integrator complex to return to the closed conformation, ready to bind to the paused elongation complex for another termination cycle. Mediates recruitment of cytoplasmic dynein to the nuclear envelope, probably as component of the integrator complex. This Homo sapiens (Human) protein is Integrator complex subunit 1.